Consider the following 420-residue polypeptide: Alpha-ketoglutarate-dependent xanthine dioxygenase xan-1 (420 aa).

The Fe cation site is built by His157 and Asp159. Residues Thr206 and Trp336 each contribute to the 2-oxoglutarate site. Fe cation is bound at residue His351. Arg366 contributes to the 2-oxoglutarate binding site. Arg366 lines the substrate pocket.

The protein belongs to the TfdA dioxygenase family. Fe(2+) is required as a cofactor.

The protein resides in the cytoplasm. It is found in the cytosol. It catalyses the reaction xanthine + 2-oxoglutarate + O2 = urate + succinate + CO2. In terms of biological role, alpha-ketoglutarate-dependent xanthine dioxygenase is a non-heme mononuclear Fe(2+) enzyme that decarboxylates alpha-ketoglutarate to succinate and CO(2) while hydroxylating xanthine to generate uric acid. Allows xanthine utilization as a nitrogen source. The polypeptide is Alpha-ketoglutarate-dependent xanthine dioxygenase xan-1 (Neurospora crassa (strain ATCC 24698 / 74-OR23-1A / CBS 708.71 / DSM 1257 / FGSC 987)).